The sequence spans 188 residues: Phosphoribosylglycinamide formyltransferase (188 aa).

12–14 (GSN) provides a ligand contact to N(1)-(5-phospho-beta-D-ribosyl)glycinamide. (6R)-10-formyltetrahydrofolate-binding positions include Lys-66, 91–94 (MRLI), and Asn-108. Residue His-110 is the Proton donor of the active site.

The protein belongs to the GART family.

The enzyme catalyses N(1)-(5-phospho-beta-D-ribosyl)glycinamide + (6R)-10-formyltetrahydrofolate = N(2)-formyl-N(1)-(5-phospho-beta-D-ribosyl)glycinamide + (6S)-5,6,7,8-tetrahydrofolate + H(+). The protein operates within purine metabolism; IMP biosynthesis via de novo pathway; N(2)-formyl-N(1)-(5-phospho-D-ribosyl)glycinamide from N(1)-(5-phospho-D-ribosyl)glycinamide (10-formyl THF route): step 1/1. Its function is as follows. Catalyzes the transfer of a formyl group from 10-formyltetrahydrofolate to 5-phospho-ribosyl-glycinamide (GAR), producing 5-phospho-ribosyl-N-formylglycinamide (FGAR) and tetrahydrofolate. The chain is Phosphoribosylglycinamide formyltransferase from Staphylococcus aureus (strain MRSA252).